A 300-amino-acid polypeptide reads, in one-letter code: Cation-efflux pump FieF (300 aa).

Residues 24–44 (LLIKIFAWWYTGSVSILAALV) form a helical membrane-spanning segment. Zn(2+) is bound by residues Asp-45 and Asp-49. The next 2 membrane-spanning stretches (helical) occupy residues 82 to 102 (AALA…LTSI) and 114 to 134 (PGVG…LVTF). The Zn(2+) site is built by His-153 and Asp-157. Helical transmembrane passes span 156-176 (SDVM…YGWH) and 178-198 (ADAL…LRMG).

The protein belongs to the cation diffusion facilitator (CDF) transporter (TC 2.A.4) family. FieF subfamily. Homodimer.

It is found in the cell inner membrane. It carries out the reaction Zn(2+)(in) + H(+)(out) = Zn(2+)(out) + H(+)(in). The catalysed reaction is Cd(2+)(in) + H(+)(out) = Cd(2+)(out) + H(+)(in). The enzyme catalyses Fe(2+)(in) + H(+)(out) = Fe(2+)(out) + H(+)(in). Its function is as follows. Divalent metal cation transporter which exports Zn(2+), Cd(2+) and possibly Fe(2+). May be involved in zinc and iron detoxification by efflux. The polypeptide is Cation-efflux pump FieF (Salmonella choleraesuis (strain SC-B67)).